The sequence spans 555 residues: Hydrogenase-4 component G (555 aa).

Belongs to the complex I 49 kDa subunit family. [4Fe-4S] cluster is required as a cofactor.

In terms of biological role, possible component of hydrogenase 4. In Escherichia coli (strain K12), this protein is Hydrogenase-4 component G.